The primary structure comprises 374 residues: Chaperone protein DnaJ (374 aa).

The J domain maps to 4–69 (SYYEILEITQ…EKRAIYDRYG (66 aa)). The CR-type zinc finger occupies 136-213 (GCKKNIDFTY…CKGLGYNESK (78 aa)). C149, C152, C165, C168, C187, C190, C201, and C204 together coordinate Zn(2+). 4 CXXCXGXG motif repeats span residues 149–156 (CKTCNGTG), 165–172 (CPKCQGRG), 187–194 (CPDCQGSG), and 201–208 (CSDCKGLG).

The protein belongs to the DnaJ family. As to quaternary structure, homodimer. Requires Zn(2+) as cofactor.

The protein localises to the cytoplasm. Functionally, participates actively in the response to hyperosmotic and heat shock by preventing the aggregation of stress-denatured proteins and by disaggregating proteins, also in an autonomous, DnaK-independent fashion. Unfolded proteins bind initially to DnaJ; upon interaction with the DnaJ-bound protein, DnaK hydrolyzes its bound ATP, resulting in the formation of a stable complex. GrpE releases ADP from DnaK; ATP binding to DnaK triggers the release of the substrate protein, thus completing the reaction cycle. Several rounds of ATP-dependent interactions between DnaJ, DnaK and GrpE are required for fully efficient folding. Also involved, together with DnaK and GrpE, in the DNA replication of plasmids through activation of initiation proteins. The protein is Chaperone protein DnaJ of Campylobacter jejuni subsp. jejuni serotype O:6 (strain 81116 / NCTC 11828).